The sequence spans 190 residues: Protein GrpE (190 aa).

A compositionally biased stretch (polar residues) spans 1-18 (MTETPNTSSEEIQTSEPS). The tract at residues 1 to 21 (MTETPNTSSEEIQTSEPSPDN) is disordered.

The protein belongs to the GrpE family. As to quaternary structure, homodimer.

It localises to the cytoplasm. Its function is as follows. Participates actively in the response to hyperosmotic and heat shock by preventing the aggregation of stress-denatured proteins, in association with DnaK and GrpE. It is the nucleotide exchange factor for DnaK and may function as a thermosensor. Unfolded proteins bind initially to DnaJ; upon interaction with the DnaJ-bound protein, DnaK hydrolyzes its bound ATP, resulting in the formation of a stable complex. GrpE releases ADP from DnaK; ATP binding to DnaK triggers the release of the substrate protein, thus completing the reaction cycle. Several rounds of ATP-dependent interactions between DnaJ, DnaK and GrpE are required for fully efficient folding. The protein is Protein GrpE of Chlamydia trachomatis serovar L2b (strain UCH-1/proctitis).